Here is a 437-residue protein sequence, read N- to C-terminus: Enolase 1 (437 aa).

Glutamine 164 contacts (2R)-2-phosphoglycerate. The active-site Proton donor is glutamate 206. Aspartate 244, glutamate 289, and aspartate 316 together coordinate Mg(2+). The (2R)-2-phosphoglycerate site is built by lysine 341, arginine 370, serine 371, and lysine 392. Residue lysine 341 is the Proton acceptor of the active site.

Belongs to the enolase family. Mg(2+) serves as cofactor.

It is found in the cytoplasm. The protein resides in the secreted. It localises to the cell surface. The catalysed reaction is (2R)-2-phosphoglycerate = phosphoenolpyruvate + H2O. It functions in the pathway carbohydrate degradation; glycolysis; pyruvate from D-glyceraldehyde 3-phosphate: step 4/5. Its function is as follows. Catalyzes the reversible conversion of 2-phosphoglycerate (2-PG) into phosphoenolpyruvate (PEP). It is essential for the degradation of carbohydrates via glycolysis. This chain is Enolase 1, found in Desulfitobacterium hafniense (strain Y51).